Reading from the N-terminus, the 213-residue chain is Orotate phosphoribosyltransferase (213 aa).

Residue Lys26 coordinates 5-phospho-alpha-D-ribose 1-diphosphate. 34-35 (FF) provides a ligand contact to orotate. Residues 72-73 (YK), Arg99, Lys100, Lys103, His105, and 124-132 (DDVITAGTA) each bind 5-phospho-alpha-D-ribose 1-diphosphate. Residues Thr128 and Arg156 each contribute to the orotate site.

The protein belongs to the purine/pyrimidine phosphoribosyltransferase family. PyrE subfamily. Homodimer. Mg(2+) is required as a cofactor.

It catalyses the reaction orotidine 5'-phosphate + diphosphate = orotate + 5-phospho-alpha-D-ribose 1-diphosphate. It functions in the pathway pyrimidine metabolism; UMP biosynthesis via de novo pathway; UMP from orotate: step 1/2. In terms of biological role, catalyzes the transfer of a ribosyl phosphate group from 5-phosphoribose 1-diphosphate to orotate, leading to the formation of orotidine monophosphate (OMP). The sequence is that of Orotate phosphoribosyltransferase from Actinobacillus pleuropneumoniae serotype 5b (strain L20).